Reading from the N-terminus, the 56-residue chain is uncharacterized protein (56 aa).

A helical transmembrane segment spans residues Met6 to Leu26.

The protein resides in the membrane. This is an uncharacterized protein from Dictyostelium discoideum (Social amoeba).